The sequence spans 180 residues: Ribosome rescue factor SmrB (180 aa).

The region spanning 98–173 is the Smr domain; that stretch reads LDLHGLTQLQ…GNAALLVLVA (76 aa).

The protein belongs to the SmrB family. In terms of assembly, associates with collided ribosomes, but not with correctly translating polysomes.

In terms of biological role, acts as a ribosome collision sensor. Detects stalled/collided disomes (pairs of ribosomes where the leading ribosome is stalled and a second ribosome has collided with it) and endonucleolytically cleaves mRNA at the 5' boundary of the stalled ribosome. Stalled/collided disomes form a new interface (primarily via the 30S subunits) that binds SmrB. Cleaved mRNA becomes available for tmRNA ligation, leading to ribosomal subunit dissociation and rescue of stalled ribosomes. This chain is Ribosome rescue factor SmrB, found in Pectobacterium atrosepticum (strain SCRI 1043 / ATCC BAA-672) (Erwinia carotovora subsp. atroseptica).